Here is a 102-residue protein sequence, read N- to C-terminus: Large ribosomal subunit protein bL21 (102 aa).

The protein belongs to the bacterial ribosomal protein bL21 family. As to quaternary structure, part of the 50S ribosomal subunit. Contacts protein L20.

This protein binds to 23S rRNA in the presence of protein L20. This is Large ribosomal subunit protein bL21 from Oceanobacillus iheyensis (strain DSM 14371 / CIP 107618 / JCM 11309 / KCTC 3954 / HTE831).